Consider the following 208-residue polypeptide: Interleukin-6 (208 aa).

Positions 1–29 are cleaved as a signal peptide; it reads MNSLFTSAFSPLAVSLGLLLVMTSAFPTP. An N-linked (GlcNAc...) asparagine glycan is attached at Asn38. Cys72 and Cys78 are oxidised to a cystine. Ser81 is subject to Phosphoserine. Cysteines 101 and 111 form a disulfide.

It belongs to the IL-6 superfamily. Component of a hexamer of two molecules each of IL6, IL6R and IL6ST; first binds to IL6R to associate with the signaling subunit IL6ST. Interacts with IL6R (via the N-terminal ectodomain); this interaction may be affected by IL6R-binding with SORL1, hence decreasing IL6 cis signaling. Interacts with SORL1 (via the N-terminal ectodomain); this interaction leads to IL6 internalization and lysosomal degradation. May form a trimeric complex with the soluble SORL1 ectodomain and soluble IL6R receptor; this interaction might stabilize circulating IL6, hence promoting IL6 trans signaling.

Its subcellular location is the secreted. Functionally, cytokine with a wide variety of biological functions in immunity, tissue regeneration, and metabolism. Binds to IL6R, then the complex associates to the signaling subunit IL6ST/gp130 to trigger the intracellular IL6-signaling pathway. The interaction with the membrane-bound IL6R and IL6ST stimulates 'classic signaling', whereas the binding of IL6 and soluble IL6R to IL6ST stimulates 'trans-signaling'. Alternatively, 'cluster signaling' occurs when membrane-bound IL6:IL6R complexes on transmitter cells activate IL6ST receptors on neighboring receiver cells. In terms of biological role, IL6 is a potent inducer of the acute phase response. Rapid production of IL6 contributes to host defense during infection and tissue injury, but excessive IL6 synthesis is involved in disease pathology. In the innate immune response, is synthesized by myeloid cells, such as macrophages and dendritic cells, upon recognition of pathogens through toll-like receptors (TLRs) at the site of infection or tissue injury. In the adaptive immune response, is required for the differentiation of B cells into immunoglobulin-secreting cells. Plays a major role in the differentiation of CD4(+) T cell subsets. Essential factor for the development of T follicular helper (Tfh) cells that are required for the induction of germinal-center formation. Required to drive naive CD4(+) T cells to the Th17 lineage. Also required for proliferation of myeloma cells and the survival of plasmablast cells. Its function is as follows. Acts as an essential factor in bone homeostasis and on vessels directly or indirectly by induction of VEGF, resulting in increased angiogenesis activity and vascular permeability. Induces, through 'trans-signaling' and synergistically with IL1B and TNF, the production of VEGF. Involved in metabolic controls, is discharged into the bloodstream after muscle contraction increasing lipolysis and improving insulin resistance. 'Trans-signaling' in central nervous system also regulates energy and glucose homeostasis. Mediates, through GLP-1, crosstalk between insulin-sensitive tissues, intestinal L cells and pancreatic islets to adapt to changes in insulin demand. Also acts as a myokine. Plays a protective role during liver injury, being required for maintenance of tissue regeneration. Also has a pivotal role in iron metabolism by regulating HAMP/hepcidin expression upon inflammation or bacterial infection. Through activation of IL6ST-YAP-NOTCH pathway, induces inflammation-induced epithelial regeneration. This Capra hircus (Goat) protein is Interleukin-6 (IL6).